We begin with the raw amino-acid sequence, 234 residues long: Sugar fermentation stimulation protein homolog (234 aa).

Belongs to the SfsA family.

The protein is Sugar fermentation stimulation protein homolog of Shewanella loihica (strain ATCC BAA-1088 / PV-4).